A 237-amino-acid chain; its full sequence is MGRIGLVVTDLVLSFMWIWAGVLVNILVHGVLGFSRTDPSGEIVRYLFSIISMFIFAYLQQATKGGLYNPLTALAAGVSGGFSSFIFSVFVRIPVEVIGSILAVKHIIHVFPEIGKGPKLNVAIHHGALTEGILTFFIVLLSMGLTRKIPGSFFMKTWIGSLAKLTLHILGSDLTGGCMNPAAVMGWAYARGEHITKEHLLVYWLGPVKATLLAVWFFKVVFKPLTEEQEKPKAKSE.

Helical transmembrane passes span 15 to 35 (FMWI…LGFS), 39 to 59 (PSGE…FAYL), 71 to 91 (LTAL…SVFV), 122 to 142 (VAIH…VLLS), 169 to 189 (ILGS…GWAY), and 202 to 222 (VYWL…KVVF). The short motif at 69–71 (NPL) is the NPA 1 element. The NPA 2 motif lies at 180-182 (NPA).

It belongs to the MIP/aquaporin (TC 1.A.8) family. SIP (TC 1.A.8.10) subfamily. In terms of tissue distribution, expressed in dividing cells and elongating regions of the root tips, emerging lateral roots, root steles, cotyledons, main veins of the rosette leaves, vascular tissues of the flower petals, stigma, stamens (anthers and filaments), pollen and the top and bottom (receptacle) of siliques.

The protein resides in the endoplasmic reticulum membrane. In terms of biological role, water channel required to facilitate the transport of water across cell membrane. Inactive in yeast cells. In Arabidopsis thaliana (Mouse-ear cress), this protein is Probable aquaporin SIP2-1 (SIP2-1).